A 391-amino-acid polypeptide reads, in one-letter code: Casein kinase II subunit alpha (391 aa).

The tract at residues 36 to 41 is interaction with beta subunit; it reads QDDYQL. In terms of domain architecture, Protein kinase spans 39 to 324; that stretch reads YQLVRKLGRG…AREAMEHPYF (286 aa). ATP contacts are provided by residues 45–53 and Lys-68; that span reads LGRGKYSEV. The Proton acceptor role is filled by Asp-156. 2 positions are modified to phosphothreonine; by CDK1: Thr-344 and Thr-360. Ser-362 and Ser-370 each carry phosphoserine; by CDK1.

It belongs to the protein kinase superfamily. Ser/Thr protein kinase family. CK2 subfamily. In terms of assembly, heterotetramer composed of two catalytic subunits (alpha chain and/or alpha' chain) and two regulatory subunits (beta chains). The tetramer can exist as a combination of 2 alpha/2 beta, 2 alpha'/2 beta or 1 alpha/1 alpha'/2 beta subunits. Also part of a CK2-SPT16-SSRP1 complex composed of SSRP1, SUPT16H, CSNK2A1, CSNK2A2 and CSNK2B, which forms following UV irradiation. Interacts with RNPS1. Interacts with SNAI1. Interacts with PML. Interacts with CCAR2. Interacts with HIRIP3. In terms of processing, phosphorylated at Thr-344, Thr-360, Ser-362 and Ser-370 by CDK1 in prophase and metaphase and dephosphorylated during anaphase. Phosphorylation does not directly affect casein kinase 2 activity, but may contribute to its regulation by forming binding sites for interacting proteins and/or targeting it to different compartments.

The protein resides in the nucleus. The enzyme catalyses L-seryl-[protein] + ATP = O-phospho-L-seryl-[protein] + ADP + H(+). The catalysed reaction is L-threonyl-[protein] + ATP = O-phospho-L-threonyl-[protein] + ADP + H(+). With respect to regulation, constitutively active protein kinase whose activity is not directly affected by phosphorylation. Seems to be regulated by level of expression and localization. Functionally, catalytic subunit of a constitutively active serine/threonine-protein kinase complex that phosphorylates a large number of substrates containing acidic residues C-terminal to the phosphorylated serine or threonine. Regulates numerous cellular processes, such as cell cycle progression, apoptosis and transcription, as well as viral infection. May act as a regulatory node which integrates and coordinates numerous signals leading to an appropriate cellular response. During mitosis, functions as a component of the p53/TP53-dependent spindle assembly checkpoint (SAC) that maintains cyclin-B-CDK1 activity and G2 arrest in response to spindle damage. Also required for p53/TP53-mediated apoptosis, phosphorylating 'Ser-392' of p53/TP53 following UV irradiation. Phosphorylates a number of DNA repair proteins in response to DNA damage, such as MDC1, MRE11, RAD9A, RAD51 and HTATSF1, promoting their recruitment to DNA damage sites. Can also negatively regulate apoptosis. Phosphorylates the caspases CASP9 and CASP2 and the apoptotic regulator NOL3. Phosphorylation protects CASP9 from cleavage and activation by CASP8, and inhibits the dimerization of CASP2 and activation of CASP8. Phosphorylates YY1, protecting YY1 from cleavage by CASP7 during apoptosis. Regulates transcription by direct phosphorylation of RNA polymerases I, II, III and IV. Also phosphorylates and regulates numerous transcription factors including NF-kappa-B, STAT1, CREB1, IRF1, IRF2, ATF1, ATF4, SRF, MAX, JUN, FOS, MYC and MYB. Phosphorylates Hsp90 and its co-chaperones FKBP4 and CDC37, which is essential for chaperone function. Mediates sequential phosphorylation of FNIP1, promoting its gradual interaction with Hsp90, leading to activate both kinase and non-kinase client proteins of Hsp90. Regulates Wnt signaling by phosphorylating CTNNB1 and the transcription factor LEF1. Acts as an ectokinase that phosphorylates several extracellular proteins. Phosphorylates PML at 'Ser-565' and primes it for ubiquitin-mediated degradation. Plays an important role in the circadian clock function by phosphorylating BMAL1 at 'Ser-90' which is pivotal for its interaction with CLOCK and which controls CLOCK nuclear entry. Phosphorylates FMR1, promoting FMR1-dependent formation of a membraneless compartment. May phosphorylate histone H2A on 'Ser-1'. This Oryctolagus cuniculus (Rabbit) protein is Casein kinase II subunit alpha (CSNK2A1).